The primary structure comprises 147 residues: MMVSRLLKNYSLYFAWLTALIATLGSLYLSLVRHIPVCDLCWYQRVCIYPLTILLGIAAYRTDRGVVKYALPLVVLGFLFSVYQYLQQMIPGFAPINLCGSTSPHCSEIHWEIFGFITLPFLGMLATLIMSFFLIMAFYSLDKRLAN.

The helical transmembrane segment at 9-28 (NYSLYFAWLTALIATLGSLY) threads the bilayer. Residues C38 and C41 are joined by a disulfide bond. The next 2 helical transmembrane spans lie at 43–62 (YQRVCIYPLTILLGIAAYRT) and 69–86 (YALPLVVLGFLFSVYQYL). A disulfide bond links C99 and C106. Residues 115-138 (GFITLPFLGMLATLIMSFFLIMAF) form a helical membrane-spanning segment.

The protein belongs to the DsbB family. BdbC subfamily.

The protein localises to the cell inner membrane. Required for disulfide bond formation in some proteins. The sequence is that of Probable disulfide formation protein from Coxiella burnetii (strain CbuG_Q212) (Coxiella burnetii (strain Q212)).